Here is a 418-residue protein sequence, read N- to C-terminus: Serine hydroxymethyltransferase (418 aa).

(6S)-5,6,7,8-tetrahydrofolate-binding positions include Leu121 and 125 to 127 (GHL). Lys230 is subject to N6-(pyridoxal phosphate)lysine. 356-358 (SPF) provides a ligand contact to (6S)-5,6,7,8-tetrahydrofolate.

The protein belongs to the SHMT family. In terms of assembly, homodimer. The cofactor is pyridoxal 5'-phosphate.

It localises to the cytoplasm. It carries out the reaction (6R)-5,10-methylene-5,6,7,8-tetrahydrofolate + glycine + H2O = (6S)-5,6,7,8-tetrahydrofolate + L-serine. It functions in the pathway one-carbon metabolism; tetrahydrofolate interconversion. Its pathway is amino-acid biosynthesis; glycine biosynthesis; glycine from L-serine: step 1/1. Its function is as follows. Catalyzes the reversible interconversion of serine and glycine with tetrahydrofolate (THF) serving as the one-carbon carrier. This reaction serves as the major source of one-carbon groups required for the biosynthesis of purines, thymidylate, methionine, and other important biomolecules. Also exhibits THF-independent aldolase activity toward beta-hydroxyamino acids, producing glycine and aldehydes, via a retro-aldol mechanism. This Shewanella pealeana (strain ATCC 700345 / ANG-SQ1) protein is Serine hydroxymethyltransferase.